The primary structure comprises 2769 residues: Thyroglobulin (2769 aa).

An N-terminal signal peptide occupies residues Met1 to Ala19. An Iodotyrosine; alternate modification is found at Tyr24. Tyr24 bears the Sulfotyrosine; alternate mark. At Tyr24 the chain carries Thyroxine; alternate. A Triiodothyronine; alternate modification is found at Tyr24. Thyroglobulin type-1 domains follow at residues Leu31–Cys92, Leu93–Cys160, Pro161–Cys297, and Pro298–Cys358. Disulfide bonds link Cys34/Cys52, Cys63/Cys70, Cys72/Cys92, Cys96/Cys120, Cys131/Cys138, Cys140/Cys160, Cys164/Cys183, and Cys194/Cys235. Tyr108 is subject to Iodotyrosine. A glycan (N-linked (GlcNAc...) (complex) asparagine; alternate) is linked at Asn110. Asn110 is a glycosylation site (N-linked (GlcNAc...) (hybrid) asparagine; alternate). At Tyr149 the chain carries Iodotyrosine; alternate. Tyr149 carries the diiodotyrosine; alternate modification. An iodotyrosine mark is found at Tyr234 and Tyr258. 9 cysteine pairs are disulfide-bonded: Cys301-Cys319, Cys330-Cys336, Cys338-Cys358, Cys364-Cys619, Cys408-Cys607, Cys630-Cys635, Cys637-Cys657, Cys661-Cys686, and Cys697-Cys702. N-linked (GlcNAc...) (complex) asparagine; alternate glycosylation is found at Asn483 and Asn495. N-linked (GlcNAc...) (hybrid) asparagine; alternate glycosylation is found at Asn483 and Asn495. Thyroglobulin type-1 domains follow at residues Ser604–Cys657, Pro658–Cys725, Pro726–Cys921, Pro922–Cys1073, Pro1074–Cys1145, and Pro1146–Cys1210. Tyr703 carries the iodotyrosine; alternate modification. Thyroxine; alternate is present on Tyr703. Tyr703 is subject to Triiodothyronine; alternate. The residue at position 703 (Tyr703) is a Diiodotyrosine; alternate. 16 cysteine pairs are disulfide-bonded: Cys704–Cys725, Cys729–Cys762, Cys773–Cys898, Cys900–Cys921, Cys925–Cys1031, Cys1042–Cys1049, Cys1051–Cys1073, Cys1077–Cys1108, Cys1126–Cys1145, Cys1149–Cys1169, Cys1181–Cys1188, Cys1190–Cys1210, Cys1215–Cys1264, Cys1231–Cys1245, Cys1306–Cys1356, and Cys1331–Cys1347. Residue Tyr784 is modified to Iodotyrosine. N-linked (GlcNAc...) (complex) asparagine; alternate glycosylation is present at Asn853. Asn853 is a glycosylation site (N-linked (GlcNAc...) (hybrid) asparagine; alternate). Tyr866 bears the Iodotyrosine; alternate mark. Tyr866 carries the post-translational modification Diiodotyrosine; alternate. At Tyr883 the chain carries Diiodotyrosine. Asn947 is a glycosylation site (N-linked (GlcNAc...) (complex) asparagine; alternate). N-linked (GlcNAc...) (hybrid) asparagine; alternate glycosylation is present at Asn947. An Iodotyrosine; alternate modification is found at Tyr992. Tyr992 bears the Diiodotyrosine; alternate mark. Asn1140 carries N-linked (GlcNAc...) (complex) asparagine; alternate glycosylation. Asn1140 is a glycosylation site (N-linked (GlcNAc...) (hybrid) asparagine; alternate). The residue at position 1310 (Tyr1310) is an Iodotyrosine. The residue at position 1310 (Tyr1310) is a Thyroxine. The N-linked (GlcNAc...) (high mannose) asparagine glycan is linked to Asn1365. 13 disulfides stabilise this stretch: Cys1441/Cys1461, Cys1464/Cys1475, Cys1478/Cys1492, Cys1495/Cys1512, Cys1516/Cys1525, Cys1545/Cys1567, Cys1605/Cys1629, Cys1609/Cys1615, Cys1641/Cys1664, Cys1726/Cys1751, Cys1730/Cys1736, Cys1735/Cys1836, and Cys1762/Cys1779. Type II repeat units lie at residues Ala1458–Gln1471, Asp1472–Gly1488, and Ser1489–Gly1505. Tyr1469 is modified (iodotyrosine; alternate). Tyr1469 carries the diiodotyrosine; alternate modification. The Thyroglobulin type-1 11 domain occupies Val1513–Cys1567. The stretch at Cys1605–Phe1725 is one Type IIIA repeat. One copy of the Type IIIB repeat lies at Cys1726 to Trp1893. Asn1776 is a glycosylation site (N-linked (GlcNAc...) (complex) asparagine; alternate). The N-linked (GlcNAc...) (hybrid) asparagine; alternate glycan is linked to Asn1776. The segment covering Met1827 to Pro1842 has biased composition (basic and acidic residues). The disordered stretch occupies residues Met1827–Asp1851. N-linked (GlcNAc...) (complex) asparagine; alternate glycosylation is present at Asn1870. An N-linked (GlcNAc...) (hybrid) asparagine; alternate glycan is attached at Asn1870. Cystine bridges form between Cys1894-Cys1920, Cys1898-Cys1905, Cys1929-Cys1940, Cys1997-Cys2025, Cys2001-Cys2007, Cys2006-Cys2077, and Cys2036-Cys2049. Residues Cys1894 to Glu1996 form a Type IIIA repeat. The stretch at Cys1997 to Arg2130 is one Type IIIB repeat. Residue Asn2014 is glycosylated (N-linked (GlcNAc...) (high mannose) asparagine). Asn2123 carries an N-linked (GlcNAc...) (high mannose) asparagine glycan. Intrachain disulfides connect Cys2131–Cys2155, Cys2135–Cys2141, and Cys2164–Cys2173. Residues Cys2131 to Pro2188 form a Type IIIA repeat. Tyr2185 is subject to Iodotyrosine. The segment at Asn2189–Lys2769 is cholinesterase-like (ChEL). Asn2251 carries N-linked (GlcNAc...) (complex) asparagine; alternate glycosylation. N-linked (GlcNAc...) (hybrid) asparagine; alternate glycosylation is present at Asn2251. Asn2296 carries N-linked (GlcNAc...) (high mannose) asparagine glycosylation. Cys2443 and Cys2454 are joined by a disulfide. Tyr2541 carries the thyroxine modification. At Tyr2574 the chain carries Iodotyrosine; alternate. A Thyroxine; alternate modification is found at Tyr2574. The residue at position 2574 (Tyr2574) is a Triiodothyronine; alternate. Residue Tyr2574 is modified to Diiodotyrosine; alternate. Iodotyrosine is present on residues Tyr2588 and Tyr2618. A disulfide bond links Cys2592 and Cys2716. At Tyr2698 the chain carries Diiodotyrosine. The tract at residues Ala2730–Lys2769 is disordered. Tyr2767 bears the Iodotyrosine; alternate mark. Tyr2767 bears the Thyroxine; alternate mark. Triiodothyronine; alternate is present on Tyr2767. Residue Tyr2767 is modified to Diiodotyrosine; alternate.

This sequence belongs to the type-B carboxylesterase/lipase family. Monomer. Homodimer (via ChEL region); occurs in the endoplasmic reticulum and is required for export to the Golgi apparatus. Homooligomer; disulfide-linked; stored in this form in the thyroid follicle lumen. Post-translationally, iodinated on tyrosine residues by TPO. There are 4 pairs of iodinated tyrosines used for coupling: acceptor Tyr-24 is coupled to donor Tyr-149 or Tyr-234, acceptor Tyr-2574 is coupled to donor Tyr-2541, acceptor Tyr-2767 in monomer 1 is coupled to donor Tyr-2767 in monomer 2 and acceptor Tyr-1310 in monomer 1 is coupled to donor Tyr-108 in monomer 2. Sulfated tyrosines are desulfated during iodination. In terms of processing, undergoes sequential proteolysis by cathepsins to release thyroxine (T4) and triiodothyronine (T3) hormones. In the thyroid follicle lumen, cross-linked TG (storage form) is solubilized by limited proteolysis mediated by cathepsins CTSB and/or CTSL. Partially cleaved TG is further processed by CTSK/cathepsin K and/or CTSL resulting in the release of T4. Following endocytosis, further processing occurs leading to the release of T3 and more T4 hormones. As to expression, specifically expressed in the thyroid gland.

Its subcellular location is the secreted. Acts as a substrate for the production of iodinated thyroid hormones thyroxine (T4) and triiodothyronine (T3). The synthesis of T3 and T4 involves iodination of selected tyrosine residues of TG/thyroglobulin followed by their oxidative coupling. Following TG re-internalization and lysosomal-mediated proteolysis, T3 and T4 are released from the polypeptide backbone leading to their secretion into the bloodstream. One dimer produces 7 thyroid hormone molecules. The protein is Thyroglobulin (TG) of Bos taurus (Bovine).